The sequence spans 202 residues: Josephin-1 (202 aa).

A Phosphoserine modification is found at serine 15. One can recognise a Josephin domain in the interval 23–202 (PPQIYHEKQR…EAHQSWRTDV (180 aa)). Catalysis depends on cysteine 36, which acts as the Nucleophile. The Proton acceptor role is filled by histidine 139.

In terms of assembly, interacts with beta-actin/ACTB. Monoubiquitinated. Ubiquitination activates deubiquitination activity in vitro.

Its subcellular location is the cell membrane. The protein localises to the cytoplasm. It carries out the reaction Thiol-dependent hydrolysis of ester, thioester, amide, peptide and isopeptide bonds formed by the C-terminal Gly of ubiquitin (a 76-residue protein attached to proteins as an intracellular targeting signal).. Its function is as follows. Deubiquitinates monoubiquitinated probes (in vitro). When ubiquitinated, cleaves 'Lys-63'-linked and 'Lys-48'-linked poly-ubiquitin chains (in vitro), hence may act as a deubiquitinating enzyme. May increase macropinocytosis and suppress clathrin- and caveolae-mediated endocytosis. May enhance membrane dynamics and cell motility independently of its catalytic activity. This is Josephin-1 (JOSD1) from Pongo abelii (Sumatran orangutan).